The chain runs to 160 residues: Major allergen Pru av 1 (160 aa).

It belongs to the BetVI family.

This is Major allergen Pru av 1 (PRUA1) from Prunus avium (Cherry).